The sequence spans 388 residues: Dual-specificity RNA methyltransferase RlmN (388 aa).

Glu-109 acts as the Proton acceptor in catalysis. The 240-residue stretch at 115 to 354 (EDDRATLCVS…TIVRKTRGDD (240 aa)) folds into the Radical SAM core domain. An intrachain disulfide couples Cys-122 to Cys-359. Residues Cys-129, Cys-133, and Cys-136 each contribute to the [4Fe-4S] cluster site. S-adenosyl-L-methionine is bound by residues 183–184 (GE), Ser-215, 237–239 (SLH), and Asn-316. Cys-359 acts as the S-methylcysteine intermediate in catalysis.

It belongs to the radical SAM superfamily. RlmN family. Requires [4Fe-4S] cluster as cofactor.

It is found in the cytoplasm. It carries out the reaction adenosine(2503) in 23S rRNA + 2 reduced [2Fe-2S]-[ferredoxin] + 2 S-adenosyl-L-methionine = 2-methyladenosine(2503) in 23S rRNA + 5'-deoxyadenosine + L-methionine + 2 oxidized [2Fe-2S]-[ferredoxin] + S-adenosyl-L-homocysteine. It catalyses the reaction adenosine(37) in tRNA + 2 reduced [2Fe-2S]-[ferredoxin] + 2 S-adenosyl-L-methionine = 2-methyladenosine(37) in tRNA + 5'-deoxyadenosine + L-methionine + 2 oxidized [2Fe-2S]-[ferredoxin] + S-adenosyl-L-homocysteine. Functionally, specifically methylates position 2 of adenine 2503 in 23S rRNA and position 2 of adenine 37 in tRNAs. m2A2503 modification seems to play a crucial role in the proofreading step occurring at the peptidyl transferase center and thus would serve to optimize ribosomal fidelity. This chain is Dual-specificity RNA methyltransferase RlmN, found in Cronobacter sakazakii (strain ATCC BAA-894) (Enterobacter sakazakii).